The chain runs to 546 residues: Oncoprotein-induced transcript 3 protein (546 aa).

The N-terminal stretch at 1 to 16 (MPLSLLLACLFTTVTL) is a signal peptide. Residues Asn89 and Asn116 are each glycosylated (N-linked (GlcNAc...) asparagine). An EGF-like; calcium-binding domain is found at 182–222 (DENECEHNNGGCSEICVNLKNSHRCACGVGRVLRSDGKTCE). 3 disulfides stabilise this stretch: Cys186/Cys197, Cys193/Cys206, and Cys208/Cys221. Residues 261-516 (TCQVPVLCKS…SRCAQGCHRR (256 aa)) enclose the ZP domain. N-linked (GlcNAc...) asparagine glycosylation occurs at Asn299. The tract at residues 524–546 (DEDSAGLQSQTLTGGPISIDWEE) is disordered.

The protein localises to the nucleus envelope. Its function is as follows. May be involved in hepatocellular function and development. The chain is Oncoprotein-induced transcript 3 protein (Oit3) from Rattus norvegicus (Rat).